The chain runs to 116 residues: Excisionase (116 aa).

In terms of biological role, part of the excision complex necessary for the excision of prophage from the host genome by site-specific recombination at the att site. This chain is Excisionase (xis), found in Salmonella phage P22 (Bacteriophage P22).